A 559-amino-acid polypeptide reads, in one-letter code: Probable D-2-hydroxyglutarate dehydrogenase, mitochondrial (559 aa).

Residues 1–80 constitute a mitochondrion transit peptide; sequence MARRAAAGLL…MNFEVQKRSF (80 aa). The region spanning 131-310 is the FAD-binding PCMH-type domain; the sequence is YKGSSQLLLL…TKIAILTPAK (180 aa).

Belongs to the FAD-binding oxidoreductase/transferase type 4 family. In terms of assembly, homodimer. The cofactor is FAD.

The protein localises to the mitochondrion. It catalyses the reaction (R)-2-hydroxyglutarate + A = 2-oxoglutarate + AH2. Functionally, catalyzes the oxidation of D-2-hydroxyglutarate to alpha-ketoglutarate. The protein is Probable D-2-hydroxyglutarate dehydrogenase, mitochondrial (D2HGDH) of Oryza sativa subsp. indica (Rice).